A 344-amino-acid polypeptide reads, in one-letter code: uncharacterized protein (344 aa).

8 consecutive transmembrane segments (helical) span residues 25–45, 68–88, 104–124, 133–153, 161–181, 224–244, 276–296, and 302–322; these read GAGW…VGAV, FVDA…ADGV, GVVP…GWNC, SACA…GVGA, GVGT…LAVV, LGAF…DAAL, VFAL…PAAL, and LVTA…LAGV.

This sequence belongs to the peptidase S58 family.

It is found in the cell membrane. In terms of biological role, aminopeptidase. This is an uncharacterized protein from Mycobacterium bovis (strain ATCC BAA-935 / AF2122/97).